The sequence spans 180 residues: Large ribosomal subunit protein uL6 (180 aa).

This sequence belongs to the universal ribosomal protein uL6 family. As to quaternary structure, part of the 50S ribosomal subunit.

In terms of biological role, this protein binds to the 23S rRNA, and is important in its secondary structure. It is located near the subunit interface in the base of the L7/L12 stalk, and near the tRNA binding site of the peptidyltransferase center. This chain is Large ribosomal subunit protein uL6, found in Dictyoglomus thermophilum (strain ATCC 35947 / DSM 3960 / H-6-12).